A 570-amino-acid chain; its full sequence is Proline--tRNA ligase (570 aa).

The protein belongs to the class-II aminoacyl-tRNA synthetase family. ProS type 1 subfamily. As to quaternary structure, homodimer.

It localises to the cytoplasm. It carries out the reaction tRNA(Pro) + L-proline + ATP = L-prolyl-tRNA(Pro) + AMP + diphosphate. Functionally, catalyzes the attachment of proline to tRNA(Pro) in a two-step reaction: proline is first activated by ATP to form Pro-AMP and then transferred to the acceptor end of tRNA(Pro). As ProRS can inadvertently accommodate and process non-cognate amino acids such as alanine and cysteine, to avoid such errors it has two additional distinct editing activities against alanine. One activity is designated as 'pretransfer' editing and involves the tRNA(Pro)-independent hydrolysis of activated Ala-AMP. The other activity is designated 'posttransfer' editing and involves deacylation of mischarged Ala-tRNA(Pro). The misacylated Cys-tRNA(Pro) is not edited by ProRS. The polypeptide is Proline--tRNA ligase (Clostridium perfringens (strain ATCC 13124 / DSM 756 / JCM 1290 / NCIMB 6125 / NCTC 8237 / Type A)).